A 333-amino-acid chain; its full sequence is Cinnamoyl-CoA reductase 1 (333 aa).

Residues 13–19 (GAGGFIA), Arg-38, Lys-44, 64–65 (DL), 84–86 (TAS), Tyr-157, Lys-161, 184–187 (PVLV), and Ser-199 each bind NADP(+). Cys-150 and Cys-158 form a disulfide bridge. The Proton donor role is filled by Lys-161.

It belongs to the NAD(P)-dependent epimerase/dehydratase family. Dihydroflavonol-4-reductase subfamily. The formation of a reversible disulfide bond reduces activity by perturbing the positioning of nearby catalytic residues. As to expression, expressed in flowers, leaves and stems.

Its subcellular location is the cytoplasm. The catalysed reaction is (E)-coniferaldehyde + NADP(+) + CoA = (E)-feruloyl-CoA + NADPH + H(+). It carries out the reaction (E)-4-coumaraldehyde + NADP(+) + CoA = (E)-4-coumaroyl-CoA + NADPH + H(+). The enzyme catalyses (E)-sinapaldehyde + NADP(+) + CoA = (E)-sinapoyl-CoA + NADPH + H(+). It catalyses the reaction (E)-cinnamaldehyde + NADP(+) + CoA = (E)-cinnamoyl-CoA + NADPH + H(+). Its pathway is aromatic compound metabolism; phenylpropanoid biosynthesis. Inhibited by sodium iodide-mediated oxidation. In terms of biological role, involved in the latter stages of lignin biosynthesis. Catalyzes one of the last steps of monolignol biosynthesis, the conversion of cinnamoyl-CoAs into their corresponding cinnamaldehydes. Mediates the conversion of feruloyl CoA to coniferylaldehyde. Also active toward p-coumaroyl-CoA and sinapoyl-CoA. Involved in the production of floral volatile phenylpropanoids in flowers of fragrant cultivars (e.g. cv. Mitchell and cv. V26) from cinnamic acid, a common precursor with the anthocyanin biosynthesis pathway involved in flower pigmentation. The protein is Cinnamoyl-CoA reductase 1 of Petunia hybrida (Petunia).